A 709-amino-acid chain; its full sequence is Dibasic-processing endoprotease (709 aa).

The first 22 residues, Met-1–Cys-22, serve as a signal peptide directing secretion. 2 propeptides span residues Ser-23–Arg-82 and Gly-83–Arg-102. The Lumenal portion of the chain corresponds to Asp-103 to Glu-668. Residues Gln-128 to Val-440 enclose the Peptidase S8 domain. Asn-155 is a glycosylation site (N-linked (GlcNAc...) asparagine). Active-site charge relay system residues include Asp-162 and His-200. 2 cysteine pairs are disulfide-bonded: Cys-216-Cys-363 and Cys-308-Cys-338. The Charge relay system role is filled by Ser-371. The region spanning Val-449 to Asn-588 is the P/Homo B domain. Residues Asn-463, Asn-471, and Asn-620 are each glycosylated (N-linked (GlcNAc...) asparagine). Residues Ile-669–Ala-693 traverse the membrane as a helical segment. At Phe-694 to Ala-709 the chain is on the cytoplasmic side.

This sequence belongs to the peptidase S8 family. Furin subfamily. Ca(2+) serves as cofactor. N-glycosylated.

The protein localises to the golgi apparatus. Its subcellular location is the trans-Golgi network membrane. Its function is as follows. Membrane-bound, subtilisin-like serine protease that processes the P-factor precursor and other precursor proteins. Essential for cell viability. Cleaves substrate on the C-terminal side of dibasic residues. The sequence is that of Dibasic-processing endoprotease (krp1) from Schizosaccharomyces pombe (strain 972 / ATCC 24843) (Fission yeast).